A 136-amino-acid chain; its full sequence is Ribosome-binding factor A (136 aa).

The protein belongs to the RbfA family. As to quaternary structure, monomer. Binds 30S ribosomal subunits, but not 50S ribosomal subunits or 70S ribosomes.

The protein localises to the cytoplasm. Its function is as follows. One of several proteins that assist in the late maturation steps of the functional core of the 30S ribosomal subunit. Associates with free 30S ribosomal subunits (but not with 30S subunits that are part of 70S ribosomes or polysomes). Required for efficient processing of 16S rRNA. May interact with the 5'-terminal helix region of 16S rRNA. In Rhizobium etli (strain ATCC 51251 / DSM 11541 / JCM 21823 / NBRC 15573 / CFN 42), this protein is Ribosome-binding factor A.